We begin with the raw amino-acid sequence, 377 residues long: Histidinol-phosphate aminotransferase 2 (377 aa).

The segment at 17–44 is disordered; that stretch reads NLSPYVPGEQPQHDDLCKLNTNENPFPP. Lys228 is modified (N6-(pyridoxal phosphate)lysine).

Belongs to the class-II pyridoxal-phosphate-dependent aminotransferase family. Histidinol-phosphate aminotransferase subfamily. As to quaternary structure, homodimer. The cofactor is pyridoxal 5'-phosphate.

The enzyme catalyses L-histidinol phosphate + 2-oxoglutarate = 3-(imidazol-4-yl)-2-oxopropyl phosphate + L-glutamate. It participates in amino-acid biosynthesis; L-histidine biosynthesis; L-histidine from 5-phospho-alpha-D-ribose 1-diphosphate: step 7/9. The chain is Histidinol-phosphate aminotransferase 2 from Psychrobacter arcticus (strain DSM 17307 / VKM B-2377 / 273-4).